The chain runs to 402 residues: Zinc finger CCHC domain-containing protein 12 (402 aa).

The interval 308-341 is disordered; sequence IDSPHNSRAQFPSTSGGSGYKNNGPGEMRRARKR. Residues 311 to 322 show a composition bias toward polar residues; the sequence is PHNSRAQFPSTS. Residues 345 to 362 form a CCHC-type zinc finger; sequence IRCSYCGEEGHSKETCDN.

It belongs to the ZCCHC12 family. As to quaternary structure, interacts with SMAD1 and CREB-binding protein (CBP). Forms a protein-DNA complex through its association with SMAD1.

In terms of biological role, transcriptional coactivator in the bone morphogenetic protein (BMP)-signaling pathway. It positively modulates BMP signaling by interacting with SMAD1 and associating with CBP in the transcription complex. It contributes to the BMP-induced enhancement of cholinergic-neuron-specific gene expression. In Homo sapiens (Human), this protein is Zinc finger CCHC domain-containing protein 12 (ZCCHC12).